Reading from the N-terminus, the 89-residue chain is U-scoloptoxin(12)-Er1a (89 aa).

The first 22 residues, 1–22, serve as a signal peptide directing secretion; that stretch reads MKGLFLVVFLMWFVSQMNTEET.

Belongs to the scoloptoxin-12 family. In terms of processing, contains 3 disulfide bonds. In terms of tissue distribution, expressed by the venom gland.

The protein resides in the secreted. In Ethmostigmus rubripes (Giant centipede), this protein is U-scoloptoxin(12)-Er1a.